Reading from the N-terminus, the 98-residue chain is NADH-ubiquinone oxidoreductase chain 4L (98 aa).

The next 3 helical transmembrane spans lie at 1-21 (MSLV…GLLM), 29-49 (ALLC…LTIL), and 61-81 (IILL…LVTI).

The protein belongs to the complex I subunit 4L family. In terms of assembly, core subunit of respiratory chain NADH dehydrogenase (Complex I) which is composed of 45 different subunits.

Its subcellular location is the mitochondrion inner membrane. The catalysed reaction is a ubiquinone + NADH + 5 H(+)(in) = a ubiquinol + NAD(+) + 4 H(+)(out). Core subunit of the mitochondrial membrane respiratory chain NADH dehydrogenase (Complex I) which catalyzes electron transfer from NADH through the respiratory chain, using ubiquinone as an electron acceptor. Part of the enzyme membrane arm which is embedded in the lipid bilayer and involved in proton translocation. The polypeptide is NADH-ubiquinone oxidoreductase chain 4L (MT-ND4L) (Ziphius cavirostris (Cuvier's beaked whale)).